Reading from the N-terminus, the 239-residue chain is uncharacterized protein (239 aa).

Positions 1 to 23 (MKTMVAMLLAAVGVAVSASSTLA) are cleaved as a signal peptide. Basic and acidic residues predominate over residues 220 to 230 (AHPKQTLRDQR). The interval 220–239 (AHPKQTLRDQRPAGGDEITK) is disordered.

This is an uncharacterized protein from Sinorhizobium fredii (strain NBRC 101917 / NGR234).